Reading from the N-terminus, the 441-residue chain is Peroxisome proliferator-activated receptor delta (441 aa).

The disordered stretch occupies residues 1–58 (MEQPPGEAAEVREEEEKKEVAEAEGAPELNGGPERSLPSSSYTDLSRSSSPPSLLDQL). A compositionally biased stretch (basic and acidic residues) spans 9–21 (AEVREEEEKKEVA). The span at 36-55 (SLPSSSYTDLSRSSSPPSLL) shows a compositional bias: low complexity. The segment at residues 70–145 (LNMECRVCGD…LGMSHNAIRF (76 aa)) is a DNA-binding region (nuclear receptor). 2 consecutive NR C4-type zinc fingers follow at residues 74 to 94 (CRVC…CEGC) and 111 to 133 (CERI…FQKC). The NR LBD domain maps to 211–439 (FVIHDIETLW…HPLLQEIYKD (229 aa)).

This sequence belongs to the nuclear hormone receptor family. NR1 subfamily. Heterodimer with the retinoid X receptor. Interacts (via domain NR LBD) with CRY1 and CRY2 in a ligand-dependent manner. 'Lys-48'-linked polyubiquitinated; leading to proteasomal degradation. Deubiquitinated and stabilized by OTUD3.

The protein localises to the nucleus. Ligand-activated transcription factor key mediator of energy metabolism in adipose tissues. Receptor that binds peroxisome proliferators such as hypolipidemic drugs and fatty acids. Has a preference for poly-unsaturated fatty acids, such as gamma-linoleic acid and eicosapentanoic acid. Once activated by a ligand, the receptor binds to promoter elements of target genes. Regulates the peroxisomal beta-oxidation pathway of fatty acids. Functions as a transcription activator for the acyl-CoA oxidase gene. Decreases expression of NPC1L1 once activated by a ligand. This is Peroxisome proliferator-activated receptor delta (PPARD) from Canis lupus familiaris (Dog).